We begin with the raw amino-acid sequence, 527 residues long: CTP synthase (527 aa).

Residues 1–270 (MKYIFVTGGV…ADVLCQLLQL (270 aa)) are amidoligase domain. Ser12 lines the CTP pocket. Ser12 serves as a coordination point for UTP. ATP is bound by residues 13 to 18 (GLGKGI) and Asp70. Residues Asp70 and Glu145 each coordinate Mg(2+). Residues 152–154 (DIE), 191–196 (KTKPTQ), and Lys227 contribute to the CTP site. UTP-binding positions include 191–196 (KTKPTQ) and Lys227. The region spanning 292–525 (TIGIVSKYGK…VEACLKNRGK (234 aa)) is the Glutamine amidotransferase type-1 domain. Residue Gly349 participates in L-glutamine binding. Cys376 (nucleophile; for glutamine hydrolysis) is an active-site residue. L-glutamine-binding positions include 377–380 (LGFQ), Glu400, and Arg455. Active-site residues include His498 and Glu500.

It belongs to the CTP synthase family. In terms of assembly, homotetramer.

The catalysed reaction is UTP + L-glutamine + ATP + H2O = CTP + L-glutamate + ADP + phosphate + 2 H(+). It carries out the reaction L-glutamine + H2O = L-glutamate + NH4(+). The enzyme catalyses UTP + NH4(+) + ATP = CTP + ADP + phosphate + 2 H(+). The protein operates within pyrimidine metabolism; CTP biosynthesis via de novo pathway; CTP from UDP: step 2/2. Allosterically activated by GTP, when glutamine is the substrate; GTP has no effect on the reaction when ammonia is the substrate. The allosteric effector GTP functions by stabilizing the protein conformation that binds the tetrahedral intermediate(s) formed during glutamine hydrolysis. Inhibited by the product CTP, via allosteric rather than competitive inhibition. Functionally, catalyzes the ATP-dependent amination of UTP to CTP with either L-glutamine or ammonia as the source of nitrogen. Regulates intracellular CTP levels through interactions with the four ribonucleotide triphosphates. This Methanospirillum hungatei JF-1 (strain ATCC 27890 / DSM 864 / NBRC 100397 / JF-1) protein is CTP synthase.